Consider the following 360-residue polypeptide: Phospho-N-acetylmuramoyl-pentapeptide-transferase (360 aa).

Topologically, residues 1–25 are periplasmic; sequence MLVWLAEHLVKYYSGFNVFSYLTFR. Residues 26–46 form a helical membrane-spanning segment; that stretch reads AIVSLLTALFISLWMGPRMIA. Residues 47-71 lie on the Cytoplasmic side of the membrane; it reads RLQKLSFGQVVRNDGPESHFSKRGT. Residues 72-92 form a helical membrane-spanning segment; sequence PTMGGIMILTSIVISVLLWAY. Residue Pro-93 is a topological domain, periplasmic. A helical transmembrane segment spans residues 94–114; that stretch reads SNPYVWCVLVVLIGYGIIGFV. Over 115–131 the chain is Cytoplasmic; the sequence is DDYRKVVRKDTKGLIAR. The helical transmembrane segment at 132-152 threads the bilayer; it reads WKYFWMSVIALGVAFALYLVG. Residues 153–167 are Periplasmic-facing; it reads KDTPATQLVVPFFKD. Residues 168 to 188 traverse the membrane as a helical segment; it reads VMPQLGLFYILLSYFVIVGTG. Residues 189–198 are Cytoplasmic-facing; it reads NAVNLTDGLD. A helical membrane pass occupies residues 199–219; sequence GLAIMPTVFVAAGFALVAWAT. The Periplasmic segment spans residues 220-235; sequence GNMNFANYLHIPYLRH. Residues 236–256 form a helical membrane-spanning segment; that stretch reads AGELVIVCTAIVGAGLGFLWF. At 257–262 the chain is on the cytoplasmic side; it reads NTYPAQ. A helical transmembrane segment spans residues 263-283; sequence VFMGDVGSLALGGALGIIAVL. Over 284 to 287 the chain is Periplasmic; sequence LRQE. A helical membrane pass occupies residues 288–308; sequence FLLVIMGGVFVVETLSVILQV. The Cytoplasmic segment spans residues 309 to 337; the sequence is GSFKLRGQRIFRMAPIHHHYELKGWPEPR. Residues 338–358 form a helical membrane-spanning segment; it reads VIVRFWIISLMLVLIGLATLK. The Periplasmic segment spans residues 359–360; sequence VR.

The protein belongs to the glycosyltransferase 4 family. MraY subfamily. Mg(2+) is required as a cofactor.

It localises to the cell inner membrane. It catalyses the reaction UDP-N-acetyl-alpha-D-muramoyl-L-alanyl-gamma-D-glutamyl-meso-2,6-diaminopimeloyl-D-alanyl-D-alanine + di-trans,octa-cis-undecaprenyl phosphate = di-trans,octa-cis-undecaprenyl diphospho-N-acetyl-alpha-D-muramoyl-L-alanyl-D-glutamyl-meso-2,6-diaminopimeloyl-D-alanyl-D-alanine + UMP. The protein operates within cell wall biogenesis; peptidoglycan biosynthesis. Catalyzes the initial step of the lipid cycle reactions in the biosynthesis of the cell wall peptidoglycan: transfers peptidoglycan precursor phospho-MurNAc-pentapeptide from UDP-MurNAc-pentapeptide onto the lipid carrier undecaprenyl phosphate, yielding undecaprenyl-pyrophosphoryl-MurNAc-pentapeptide, known as lipid I. This Salmonella gallinarum (strain 287/91 / NCTC 13346) protein is Phospho-N-acetylmuramoyl-pentapeptide-transferase.